Here is a 316-residue protein sequence, read N- to C-terminus: Olfactory receptor 10H4 (316 aa).

Residues methionine 1 to proline 26 lie on the Extracellular side of the membrane. A glycan (N-linked (GlcNAc...) asparagine) is linked at asparagine 5. A helical transmembrane segment spans residues isoleucine 27–methionine 47. The Cytoplasmic portion of the chain corresponds to alanine 48–arginine 55. Residues leucine 56–valine 76 form a helical membrane-spanning segment. The Extracellular portion of the chain corresponds to alanine 77–asparagine 100. Cysteine 98 and cysteine 190 are oxidised to a cystine. The helical transmembrane segment at glutamine 101–tyrosine 121 threads the bilayer. At aspartate 122–arginine 140 the chain is on the cytoplasmic side. A helical membrane pass occupies residues aspartate 141 to threonine 161. Residues threonine 162–isoleucine 198 lie on the Extracellular side of the membrane. Residues methionine 199–serine 219 traverse the membrane as a helical segment. Over tyrosine 220–threonine 239 the chain is Cytoplasmic. A helical membrane pass occupies residues phenylalanine 240 to isoleucine 260. At tyrosine 261–aspartate 273 the chain is on the extracellular side. A helical transmembrane segment spans residues alanine 274–leucine 294. At arginine 295–serine 316 the chain is on the cytoplasmic side.

This sequence belongs to the G-protein coupled receptor 1 family.

It localises to the cell membrane. Odorant receptor. The chain is Olfactory receptor 10H4 (OR10H4) from Homo sapiens (Human).